Here is a 112-residue protein sequence, read N- to C-terminus: Small capsomere-interacting protein (112 aa).

The protein belongs to the herpesviridae small capsomere-interacting protein family. As to quaternary structure, interacts with the major capsid protein/MCP. Interacts with host TSPAN7; this interaction may be responsible for the presence of TSPAN7 in extracellular virions. Interacts with host MAPRE3 and DYNLT1; these interactions mediate retrograde transport of viral capsids.

It is found in the virion. Its subcellular location is the host nucleus. Functionally, participates in the assembly of the infectious particles by decorating the outer surface of the capsid shell and thus forming a layer between the capsid and the tegument. Complexes composed of the major capsid protein and small capsomere-interacting protein/SCP assemble together in the host cytoplasm and are translocated to the nucleus, where they accumulate and participate in capsid assembly. Interaction with host dynein light chains suggests a possible function in the retrogarde transport of incoming viral capsids. The sequence is that of Small capsomere-interacting protein from Human herpesvirus 1 (strain 17) (HHV-1).